The chain runs to 189 residues: Cancer/testis antigen family 45 member A2 (189 aa).

Belongs to the CT45 family. In terms of tissue distribution, testis specific. Expressed in cancer cell lines.

This chain is Cancer/testis antigen family 45 member A2, found in Homo sapiens (Human).